A 215-amino-acid polypeptide reads, in one-letter code: Protein N-lysine methyltransferase METTL21A (215 aa).

S-adenosyl-L-methionine contacts are provided by residues W47, 73–75, D94, W125, and A141; that span reads GAG.

This sequence belongs to the methyltransferase superfamily. METTL21 family.

The protein localises to the cytoplasm. The catalysed reaction is L-lysyl-[protein] + 3 S-adenosyl-L-methionine = N(6),N(6),N(6)-trimethyl-L-lysyl-[protein] + 3 S-adenosyl-L-homocysteine + 3 H(+). Protein-lysine methyltransferase that selectively trimethylates residues in heat shock protein 70 (HSP70) family members. This Xenopus tropicalis (Western clawed frog) protein is Protein N-lysine methyltransferase METTL21A (mettl21a).